The following is a 339-amino-acid chain: MRLIEQHWYRPRGWLTALLAPLEGLFALLAAARRQAFRRGWKTSGRLPVPVVVIGNINVGGVGKTPLTLALLRDFAARGVKVGVISRGYGGKAPAPTEVGPDSDPALVGDEPLLLAAAGAPVVVGRDRVAAGRHLLARHPDVELILSDDGLQHYRLARDLEIVVLDGSRGLGSGRLLPNGPLREPPSRLAAVDAVVVNGEGAQLPLPDGLPRFAMTLRPGACHALDDASRARDAAGFAGRKVAALAGIGHPERFFDTLAGQGIAVEQRLSFPDHHAFVPGDIPADADAVIVTSKDAVKLARVIHDAAQRARLWVLPVQATLAPDLCEWILARLKTKHGR.

Residue 58 to 65 (NVGGVGKT) coordinates ATP.

It belongs to the LpxK family.

The enzyme catalyses a lipid A disaccharide + ATP = a lipid IVA + ADP + H(+). The protein operates within glycolipid biosynthesis; lipid IV(A) biosynthesis; lipid IV(A) from (3R)-3-hydroxytetradecanoyl-[acyl-carrier-protein] and UDP-N-acetyl-alpha-D-glucosamine: step 6/6. Transfers the gamma-phosphate of ATP to the 4'-position of a tetraacyldisaccharide 1-phosphate intermediate (termed DS-1-P) to form tetraacyldisaccharide 1,4'-bis-phosphate (lipid IVA). In Chromobacterium violaceum (strain ATCC 12472 / DSM 30191 / JCM 1249 / CCUG 213 / NBRC 12614 / NCIMB 9131 / NCTC 9757 / MK), this protein is Tetraacyldisaccharide 4'-kinase.